A 240-amino-acid polypeptide reads, in one-letter code: Phosphoribosylaminoimidazole-succinocarboxamide synthase (240 aa).

It belongs to the SAICAR synthetase family.

The catalysed reaction is 5-amino-1-(5-phospho-D-ribosyl)imidazole-4-carboxylate + L-aspartate + ATP = (2S)-2-[5-amino-1-(5-phospho-beta-D-ribosyl)imidazole-4-carboxamido]succinate + ADP + phosphate + 2 H(+). The protein operates within purine metabolism; IMP biosynthesis via de novo pathway; 5-amino-1-(5-phospho-D-ribosyl)imidazole-4-carboxamide from 5-amino-1-(5-phospho-D-ribosyl)imidazole-4-carboxylate: step 1/2. This Pyrobaculum calidifontis (strain DSM 21063 / JCM 11548 / VA1) protein is Phosphoribosylaminoimidazole-succinocarboxamide synthase.